The sequence spans 444 residues: Elongation factor 1-alpha (444 aa).

Residues 15 to 236 (KPHLNLAVIG…ALDTFQPPPR (222 aa)) enclose the tr-type G domain. Residues 24-31 (GHVDNGKS) form a G1 region. Residue 24–31 (GHVDNGKS) participates in GTP binding. Serine 31 contributes to the Mg(2+) binding site. The G2 stretch occupies residues 80 to 84 (GVTIE). Positions 101–104 (DLPG) are G3. GTP contacts are provided by residues 101-105 (DLPGH) and 163-166 (NKMD). Residues 163 to 166 (NKMD) are G4. A G5 region spans residues 202–204 (SAI).

This sequence belongs to the TRAFAC class translation factor GTPase superfamily. Classic translation factor GTPase family. EF-Tu/EF-1A subfamily.

The protein localises to the cytoplasm. The catalysed reaction is GTP + H2O = GDP + phosphate + H(+). Functionally, GTP hydrolase that promotes the GTP-dependent binding of aminoacyl-tRNA to the A-site of ribosomes during protein biosynthesis. In Pyrobaculum islandicum (strain DSM 4184 / JCM 9189 / GEO3), this protein is Elongation factor 1-alpha.